The primary structure comprises 156 residues: Small ribosomal subunit protein uS7 (156 aa).

Belongs to the universal ribosomal protein uS7 family. As to quaternary structure, part of the 30S ribosomal subunit. Contacts proteins S9 and S11.

Functionally, one of the primary rRNA binding proteins, it binds directly to 16S rRNA where it nucleates assembly of the head domain of the 30S subunit. Is located at the subunit interface close to the decoding center, probably blocks exit of the E-site tRNA. In Nitratidesulfovibrio vulgaris (strain DSM 19637 / Miyazaki F) (Desulfovibrio vulgaris), this protein is Small ribosomal subunit protein uS7.